A 582-amino-acid chain; its full sequence is Aspartate--tRNA ligase (582 aa).

An L-aspartate-binding site is contributed by Glu-174. Residues 198–201 form an aspartate region; that stretch reads QITK. Residue Arg-220 participates in L-aspartate binding. ATP-binding positions include 220 to 222 and Gln-229; that span reads RDE. His-443 contacts L-aspartate. Glu-477 contributes to the ATP binding site. Residue Arg-484 coordinates L-aspartate. 529 to 532 contributes to the ATP binding site; sequence GLDR.

This sequence belongs to the class-II aminoacyl-tRNA synthetase family. Type 1 subfamily. In terms of assembly, homodimer.

It localises to the cytoplasm. The catalysed reaction is tRNA(Asp) + L-aspartate + ATP = L-aspartyl-tRNA(Asp) + AMP + diphosphate. In terms of biological role, catalyzes the attachment of L-aspartate to tRNA(Asp) in a two-step reaction: L-aspartate is first activated by ATP to form Asp-AMP and then transferred to the acceptor end of tRNA(Asp). The protein is Aspartate--tRNA ligase of Streptococcus pyogenes serotype M5 (strain Manfredo).